The chain runs to 261 residues: Cytochrome c oxidase subunit 3 (261 aa).

Over 1–15 (MTHQTHAYHMVDPSP) the chain is Mitochondrial matrix. A helical transmembrane segment spans residues 16 to 34 (WPLTGALSALLMTSGLTMW). Topologically, residues 35–40 (FHYHSV) are mitochondrial intermembrane. A helical transmembrane segment spans residues 41–66 (TLLLLGLTTNILTMFQWWRDVVREGT). Residues 67–72 (FQGHHT) lie on the Mitochondrial matrix side of the membrane. Residues 73–105 (PVVQESLRYGMILFITSEVLFFTGFFWAFYHSS) form a helical membrane-spanning segment. The Mitochondrial intermembrane portion of the chain corresponds to 106-128 (LAPTPELGSYWPPVGVYPLNPLE). The chain crosses the membrane as a helical span at residues 129–152 (VPLLNTSVLLASGVTITWAHHSLM). The Mitochondrial matrix portion of the chain corresponds to 153–155 (EGN). The helical transmembrane segment at 156–183 (RKNMLQALLITILLGVYFTLLQMFEYYE) threads the bilayer. At 184–190 (ASFTISD) the chain is on the mitochondrial intermembrane side. Residues 191–223 (GIYGSTFFVTTGFHGLHVIIGSTFLLTCFIRQL) traverse the membrane as a helical segment. Topologically, residues 224–232 (KFHFTSNHH) are mitochondrial matrix. A helical transmembrane segment spans residues 233 to 256 (FGFEAAAWYWHFVDVVWLFLYLSI). Over 257–261 (YWWGS) the chain is Mitochondrial intermembrane.

Belongs to the cytochrome c oxidase subunit 3 family. As to quaternary structure, component of the cytochrome c oxidase (complex IV, CIV), a multisubunit enzyme composed of 14 subunits. The complex is composed of a catalytic core of 3 subunits MT-CO1, MT-CO2 and MT-CO3, encoded in the mitochondrial DNA, and 11 supernumerary subunits COX4I, COX5A, COX5B, COX6A, COX6B, COX6C, COX7A, COX7B, COX7C, COX8 and NDUFA4, which are encoded in the nuclear genome. The complex exists as a monomer or a dimer and forms supercomplexes (SCs) in the inner mitochondrial membrane with NADH-ubiquinone oxidoreductase (complex I, CI) and ubiquinol-cytochrome c oxidoreductase (cytochrome b-c1 complex, complex III, CIII), resulting in different assemblies (supercomplex SCI(1)III(2)IV(1) and megacomplex MCI(2)III(2)IV(2)).

The protein resides in the mitochondrion inner membrane. It catalyses the reaction 4 Fe(II)-[cytochrome c] + O2 + 8 H(+)(in) = 4 Fe(III)-[cytochrome c] + 2 H2O + 4 H(+)(out). Its function is as follows. Component of the cytochrome c oxidase, the last enzyme in the mitochondrial electron transport chain which drives oxidative phosphorylation. The respiratory chain contains 3 multisubunit complexes succinate dehydrogenase (complex II, CII), ubiquinol-cytochrome c oxidoreductase (cytochrome b-c1 complex, complex III, CIII) and cytochrome c oxidase (complex IV, CIV), that cooperate to transfer electrons derived from NADH and succinate to molecular oxygen, creating an electrochemical gradient over the inner membrane that drives transmembrane transport and the ATP synthase. Cytochrome c oxidase is the component of the respiratory chain that catalyzes the reduction of oxygen to water. Electrons originating from reduced cytochrome c in the intermembrane space (IMS) are transferred via the dinuclear copper A center (CU(A)) of subunit 2 and heme A of subunit 1 to the active site in subunit 1, a binuclear center (BNC) formed by heme A3 and copper B (CU(B)). The BNC reduces molecular oxygen to 2 water molecules using 4 electrons from cytochrome c in the IMS and 4 protons from the mitochondrial matrix. This chain is Cytochrome c oxidase subunit 3 (MT-CO3), found in Loxodonta africana (African elephant).